Here is a 126-residue protein sequence, read N- to C-terminus: Large ribosomal subunit protein uL22 (126 aa).

This sequence belongs to the universal ribosomal protein uL22 family. Part of the 50S ribosomal subunit.

Functionally, this protein binds specifically to 23S rRNA; its binding is stimulated by other ribosomal proteins, e.g. L4, L17, and L20. It is important during the early stages of 50S assembly. It makes multiple contacts with different domains of the 23S rRNA in the assembled 50S subunit and ribosome. The globular domain of the protein is located near the polypeptide exit tunnel on the outside of the subunit, while an extended beta-hairpin is found that lines the wall of the exit tunnel in the center of the 70S ribosome. In Maricaulis maris (strain MCS10) (Caulobacter maris), this protein is Large ribosomal subunit protein uL22.